Consider the following 257-residue polypeptide: Large ribosomal subunit protein uL3 (257 aa).

Residue Gln-151 is modified to N5-methylglutamine. Positions 218 to 257 are disordered; the sequence is YPASIKSAANTNTAPADAPVETPAEEAVVDTAATDGAQES. The span at 225 to 236 shows a compositional bias: low complexity; sequence AANTNTAPADAP.

Belongs to the universal ribosomal protein uL3 family. In terms of assembly, part of the 50S ribosomal subunit. Forms a cluster with proteins L14 and L19. Methylated by PrmB.

In terms of biological role, one of the primary rRNA binding proteins, it binds directly near the 3'-end of the 23S rRNA, where it nucleates assembly of the 50S subunit. This is Large ribosomal subunit protein uL3 from Sphingopyxis alaskensis (strain DSM 13593 / LMG 18877 / RB2256) (Sphingomonas alaskensis).